The following is an 87-amino-acid chain: Probable acyl carrier protein PigG (87 aa).

The Carrier domain occupies 1–78; that stretch reads MLESKLINHI…SMVALVQRLK (78 aa). At Ser36 the chain carries O-(pantetheine 4'-phosphoryl)serine.

The protein operates within antibiotic biosynthesis; prodigiosin biosynthesis. In terms of biological role, involved in the biosynthesis of 4-methoxy-2,2'-bipyrrole-5-carbaldehyde (MBC), one of the terminal products involved in the biosynthesis of the red antibiotic prodigiosin (Pig). Carrier of the L-prolyl group transferred from L-prolyl-AMP by PigI. The chain is Probable acyl carrier protein PigG from Serratia sp. (strain ATCC 39006) (Prodigiosinella confusarubida).